The sequence spans 205 residues: Holliday junction branch migration complex subunit RuvA (205 aa).

The tract at residues 1–64 (MIGRLRGVLI…EDAQLLYGFI (64 aa)) is domain I. The tract at residues 65–143 (TKKERSLFRL…SLMEASVGSE (79 aa)) is domain II. Positions 144–156 (REFVLQSNYSPAP) are flexible linker. Positions 157 to 205 (TVNSAEEDAISALLSLGYKPPQASKAVSAAYKEGMDSETLIKAALKSML) are domain III.

Belongs to the RuvA family. Homotetramer. Forms an RuvA(8)-RuvB(12)-Holliday junction (HJ) complex. HJ DNA is sandwiched between 2 RuvA tetramers; dsDNA enters through RuvA and exits via RuvB. An RuvB hexamer assembles on each DNA strand where it exits the tetramer. Each RuvB hexamer is contacted by two RuvA subunits (via domain III) on 2 adjacent RuvB subunits; this complex drives branch migration. In the full resolvosome a probable DNA-RuvA(4)-RuvB(12)-RuvC(2) complex forms which resolves the HJ.

It is found in the cytoplasm. Its function is as follows. The RuvA-RuvB-RuvC complex processes Holliday junction (HJ) DNA during genetic recombination and DNA repair, while the RuvA-RuvB complex plays an important role in the rescue of blocked DNA replication forks via replication fork reversal (RFR). RuvA specifically binds to HJ cruciform DNA, conferring on it an open structure. The RuvB hexamer acts as an ATP-dependent pump, pulling dsDNA into and through the RuvAB complex. HJ branch migration allows RuvC to scan DNA until it finds its consensus sequence, where it cleaves and resolves the cruciform DNA. The chain is Holliday junction branch migration complex subunit RuvA from Shewanella sp. (strain MR-4).